Reading from the N-terminus, the 1375-residue chain is DNA-directed RNA polymerase subunit beta (1375 aa).

This sequence belongs to the RNA polymerase beta chain family. The RNAP catalytic core consists of 2 alpha, 1 beta, 1 beta' and 1 omega subunit. When a sigma factor is associated with the core the holoenzyme is formed, which can initiate transcription.

The enzyme catalyses RNA(n) + a ribonucleoside 5'-triphosphate = RNA(n+1) + diphosphate. In terms of biological role, DNA-dependent RNA polymerase catalyzes the transcription of DNA into RNA using the four ribonucleoside triphosphates as substrates. In Malacoplasma penetrans (strain HF-2) (Mycoplasma penetrans), this protein is DNA-directed RNA polymerase subunit beta.